Reading from the N-terminus, the 578-residue chain is Proline--tRNA ligase (578 aa).

The protein belongs to the class-II aminoacyl-tRNA synthetase family. ProS type 1 subfamily. In terms of assembly, homodimer.

The protein resides in the cytoplasm. It carries out the reaction tRNA(Pro) + L-proline + ATP = L-prolyl-tRNA(Pro) + AMP + diphosphate. Its function is as follows. Catalyzes the attachment of proline to tRNA(Pro) in a two-step reaction: proline is first activated by ATP to form Pro-AMP and then transferred to the acceptor end of tRNA(Pro). As ProRS can inadvertently accommodate and process non-cognate amino acids such as alanine and cysteine, to avoid such errors it has two additional distinct editing activities against alanine. One activity is designated as 'pretransfer' editing and involves the tRNA(Pro)-independent hydrolysis of activated Ala-AMP. The other activity is designated 'posttransfer' editing and involves deacylation of mischarged Ala-tRNA(Pro). The misacylated Cys-tRNA(Pro) is not edited by ProRS. The chain is Proline--tRNA ligase from Burkholderia mallei (strain ATCC 23344).